The following is a 386-amino-acid chain: MATYTCITCRVAFRDAEMQRAHYKTDWHRYNLRRKVANMAPVTAEGFQERVRAQRAVAEEESKGTATYCTVCSKKFATFNAYENHLKSRRHVELEKKAVQAVSRQVEMMNEKNLEKGLGVDSVNKDAMNAAIQQAIKAQPSTSPKKAPFMPTDESRRVAGAVRRGTPERDPTEKPPRLQWFEQQAKKLAKQQWEESEEEGEEDDEDWEDIDSDDGLECENPGVEEEDAEDAEAEESPPLGAIPITDCLFCSHHSSSLVKNVAHMTKVHSFFIPDIEYLSDLKGLIKYLGEKVGVGKICLWCNEKGKSFYSTEAVQAHMNDKSHCKLFTDGDAALEFADFYDFRSSYPDYKEGQDPAEIEDLSSEKILECDDETMELILPSDLEYFD.

Ala2 carries the post-translational modification N-acetylalanine. 2 U1-type zinc fingers span residues 4-28 (YTCI…TDWH) and 67-91 (TYCT…SRRH). The segment at 135 to 237 (AIKAQPSTSP…AEDAEAEESP (103 aa)) is disordered. The segment covering 165-176 (GTPERDPTEKPP) has biased composition (basic and acidic residues). Residues 194–235 (EESEEEGEEDDEDWEDIDSDDGLECENPGVEEEDAEDAEAEE) are compositionally biased toward acidic residues. Phosphoserine is present on Ser269.

Belongs to the REI1 family. As to quaternary structure, homo- and heterodimer. Associates with pre-60S ribosomal particles. Interacts with MELK and MYBL2. Interacts with DNAJC21. Phosphorylated by MELK. The phosphorylation may redirect the protein to the nucleus. In terms of processing, ubiquitinated by HECTD1, leading to its degradation.

Its subcellular location is the cytoplasm. It is found in the nucleus. Pre-60S-associated cytoplasmic factor involved in the cytoplasmic maturation of the 60S subunit. In Rattus norvegicus (Rat), this protein is Cytoplasmic 60S subunit biogenesis factor ZNF622 (Znf622).